Reading from the N-terminus, the 727-residue chain is Anaphase-promoting complex subunit 5 (727 aa).

A Phosphoserine modification is found at Ser-180. TPR repeat units lie at residues 194–234 (QKQA…FNPD), 235–285 (FAEA…GRSL), 286–322 (RYAA…SNDH), 323–359 (VCLQ…FGLP), 360–390 (RAFA…SELI), 391–438 (DISI…TESF), 439–472 (AVAL…FPPN), 473–512 (SQHA…ALNG), 513–552 (IEGV…TEMV), 553–592 (ISVL…QYLA), 593–632 (SETV…ILDK), 633–668 (GRAM…NLTE), and 669–708 (AKNY…CAMV). Residue Thr-217 is modified to Phosphothreonine.

This sequence belongs to the APC5 family. The mammalian APC/C is composed at least of 14 distinct subunits ANAPC1, ANAPC2, CDC27/APC3, ANAPC4, ANAPC5, CDC16/APC6, ANAPC7, CDC23/APC8, ANAPC10, ANAPC11, CDC26/APC12, ANAPC13, ANAPC15 and ANAPC16 that assemble into a complex of at least 19 chains with a combined molecular mass of around 1.2 MDa; APC/C interacts with FZR1 and FBXO5.

It is found in the nucleus. Its subcellular location is the cytoplasm. The protein localises to the cytoskeleton. The protein resides in the spindle. Its pathway is protein modification; protein ubiquitination. Functionally, component of the anaphase promoting complex/cyclosome (APC/C), a cell cycle-regulated E3 ubiquitin ligase that controls progression through mitosis and the G1 phase of the cell cycle. The APC/C complex acts by mediating ubiquitination and subsequent degradation of target proteins: it mainly mediates the formation of 'Lys-11'-linked polyubiquitin chains and, to a lower extent, the formation of 'Lys-48'- and 'Lys-63'-linked polyubiquitin chains. The APC/C complex catalyzes assembly of branched 'Lys-11'-/'Lys-48'-linked branched ubiquitin chains on target proteins. The sequence is that of Anaphase-promoting complex subunit 5 (Anapc5) from Rattus norvegicus (Rat).